We begin with the raw amino-acid sequence, 396 residues long: Elongation factor Tu (396 aa).

One can recognise a tr-type G domain in the interval 10-205 (KPHVNIGTIG…AVDESIPDPV (196 aa)). The segment at 19 to 26 (GHVDHGKT) is G1. 19-26 (GHVDHGKT) contributes to the GTP binding site. Residue threonine 26 participates in Mg(2+) binding. The interval 62 to 66 (GITIN) is G2. Positions 83-86 (DAPG) are G3. GTP contacts are provided by residues 83–87 (DAPGH) and 138–141 (NKAD). The interval 138–141 (NKAD) is G4. A G5 region spans residues 175-177 (SAL).

The protein belongs to the TRAFAC class translation factor GTPase superfamily. Classic translation factor GTPase family. EF-Tu/EF-1A subfamily. In terms of assembly, monomer.

The protein localises to the cytoplasm. The catalysed reaction is GTP + H2O = GDP + phosphate + H(+). GTP hydrolase that promotes the GTP-dependent binding of aminoacyl-tRNA to the A-site of ribosomes during protein biosynthesis. This is Elongation factor Tu from Rhodococcus erythropolis (strain PR4 / NBRC 100887).